We begin with the raw amino-acid sequence, 212 residues long: Probable GTP-binding protein EngB (212 aa).

In terms of domain architecture, EngB-type G spans 38 to 210 (SLPEIAFVGK…KASLAKCIKP (173 aa)). GTP is bound by residues 46-53 (GKSNVGKS), 73-77 (GRTRQ), 91-94 (DLPG), 158-161 (TKSD), and 189-191 (VSN). The Mg(2+) site is built by S53 and T75.

It belongs to the TRAFAC class TrmE-Era-EngA-EngB-Septin-like GTPase superfamily. EngB GTPase family. It depends on Mg(2+) as a cofactor.

Necessary for normal cell division and for the maintenance of normal septation. This chain is Probable GTP-binding protein EngB, found in Rickettsia conorii (strain ATCC VR-613 / Malish 7).